The primary structure comprises 354 residues: Small ribosomal subunit biogenesis GTPase RsgA (354 aa).

A disordered region spans residues 1–46; sequence MSKKKPLSQGQLRRMRANHEKRLNRDSGDKNTPELQDSSLGPEQSG. The segment covering 17 to 32 has biased composition (basic and acidic residues); the sequence is ANHEKRLNRDSGDKNT. Residues 33–46 are compositionally biased toward polar residues; it reads PELQDSSLGPEQSG. In terms of domain architecture, CP-type G spans 108 to 276; that stretch reads HSSLSRPDLY…LIDSPGVREF (169 aa). GTP is bound by residues 164-167 and 218-226; these read NKID and GQSGVGKSS. Zn(2+)-binding residues include Cys-300, Cys-305, His-307, and Cys-313.

The protein belongs to the TRAFAC class YlqF/YawG GTPase family. RsgA subfamily. As to quaternary structure, monomer. Associates with 30S ribosomal subunit, binds 16S rRNA. Requires Zn(2+) as cofactor.

It localises to the cytoplasm. Its function is as follows. One of several proteins that assist in the late maturation steps of the functional core of the 30S ribosomal subunit. Helps release RbfA from mature subunits. May play a role in the assembly of ribosomal proteins into the subunit. Circularly permuted GTPase that catalyzes slow GTP hydrolysis, GTPase activity is stimulated by the 30S ribosomal subunit. This Shewanella oneidensis (strain ATCC 700550 / JCM 31522 / CIP 106686 / LMG 19005 / NCIMB 14063 / MR-1) protein is Small ribosomal subunit biogenesis GTPase RsgA.